A 148-amino-acid polypeptide reads, in one-letter code: FAD synthase (148 aa).

Residues 9 to 10, 14 to 17, Asn-92, and Tyr-119 contribute to the ATP site; these read TF and HPGH.

The protein belongs to the archaeal FAD synthase family. As to quaternary structure, homodimer. A divalent metal cation serves as cofactor.

The enzyme catalyses FMN + ATP + H(+) = FAD + diphosphate. The protein operates within cofactor biosynthesis; FAD biosynthesis; FAD from FMN: step 1/1. Functionally, catalyzes the transfer of the AMP portion of ATP to flavin mononucleotide (FMN) to produce flavin adenine dinucleotide (FAD) coenzyme. In Methanolacinia petrolearia (strain DSM 11571 / OCM 486 / SEBR 4847) (Methanoplanus petrolearius), this protein is FAD synthase.